Here is a 661-residue protein sequence, read N- to C-terminus: Threonine--tRNA ligase (661 aa).

A TGS domain is found at 1 to 64; it reads MSQAISLTFP…TTGRIEIITR (64 aa). Positions 245–546 are catalytic; sequence DHRRLGREMD…LIENFAGHMP (302 aa). 3 residues coordinate Zn(2+): C341, H392, and H523.

The protein belongs to the class-II aminoacyl-tRNA synthetase family. Homodimer. The cofactor is Zn(2+).

The protein resides in the cytoplasm. The catalysed reaction is tRNA(Thr) + L-threonine + ATP = L-threonyl-tRNA(Thr) + AMP + diphosphate + H(+). In terms of biological role, catalyzes the attachment of threonine to tRNA(Thr) in a two-step reaction: L-threonine is first activated by ATP to form Thr-AMP and then transferred to the acceptor end of tRNA(Thr). Also edits incorrectly charged L-seryl-tRNA(Thr). The protein is Threonine--tRNA ligase of Rhizobium johnstonii (strain DSM 114642 / LMG 32736 / 3841) (Rhizobium leguminosarum bv. viciae).